Reading from the N-terminus, the 538-residue chain is CTP synthase (538 aa).

Residues 1–265 (MARYIFVTGG…DLQVLNYFKL (265 aa)) form an amidoligase domain region. Residue S13 participates in CTP binding. S13 is a UTP binding site. Residues 14–19 (SLGKGL) and D71 each bind ATP. Mg(2+)-binding residues include D71 and E139. CTP is bound by residues 146–148 (DIE), 186–191 (KTKPTQ), and K222. UTP contacts are provided by residues 186–191 (KTKPTQ) and K222. Residues 291 to 538 (NIAIIGKYVE…SFIKAAKNHK (248 aa)) form the Glutamine amidotransferase type-1 domain. Position 353 (G353) interacts with L-glutamine. The active-site Nucleophile; for glutamine hydrolysis is the C380. L-glutamine-binding positions include 381–384 (YGMQ), E404, and R468. Catalysis depends on residues H513 and E515.

The protein belongs to the CTP synthase family. As to quaternary structure, homotetramer.

It catalyses the reaction UTP + L-glutamine + ATP + H2O = CTP + L-glutamate + ADP + phosphate + 2 H(+). It carries out the reaction L-glutamine + H2O = L-glutamate + NH4(+). The enzyme catalyses UTP + NH4(+) + ATP = CTP + ADP + phosphate + 2 H(+). It participates in pyrimidine metabolism; CTP biosynthesis via de novo pathway; CTP from UDP: step 2/2. Its activity is regulated as follows. Allosterically activated by GTP, when glutamine is the substrate; GTP has no effect on the reaction when ammonia is the substrate. The allosteric effector GTP functions by stabilizing the protein conformation that binds the tetrahedral intermediate(s) formed during glutamine hydrolysis. Inhibited by the product CTP, via allosteric rather than competitive inhibition. Functionally, catalyzes the ATP-dependent amination of UTP to CTP with either L-glutamine or ammonia as the source of nitrogen. Regulates intracellular CTP levels through interactions with the four ribonucleotide triphosphates. The polypeptide is CTP synthase (Pelagibacter ubique (strain HTCC1062)).